Here is a 186-residue protein sequence, read N- to C-terminus: High mobility group protein B4 (186 aa).

2 consecutive DNA-binding regions (HMG box) follow at residues Pro9–Val79 and Pro93–Arg161. The segment at Asn77–Ser98 is disordered.

It belongs to the HMGB family.

It localises to the nucleus. It is found in the chromosome. The polypeptide is High mobility group protein B4 (HMGB4) (Homo sapiens (Human)).